The following is a 273-amino-acid chain: Undecaprenyl-diphosphatase (273 aa).

7 helical membrane-spanning segments follow: residues 4–24 (FLLLKGLILGIVEGLTEFLPI), 43–63 (KGKVFTIVIQLGAILAVCWEY), 83–103 (FVLNLLIAFLPAAILGLLFIK), 109–129 (LFHPVPVALAFIVGGLLILWA), 184–204 (ATEFSFFLAIPVMFAATFYDL), 218–238 (VFAIGFVASFISALLAVRGLL), and 248–268 (VFAWYRIGFGIIVLITAYSGM).

This sequence belongs to the UppP family.

The protein localises to the cell inner membrane. It catalyses the reaction di-trans,octa-cis-undecaprenyl diphosphate + H2O = di-trans,octa-cis-undecaprenyl phosphate + phosphate + H(+). Its function is as follows. Catalyzes the dephosphorylation of undecaprenyl diphosphate (UPP). Confers resistance to bacitracin. The polypeptide is Undecaprenyl-diphosphatase (Nitrosospira multiformis (strain ATCC 25196 / NCIMB 11849 / C 71)).